The following is a 76-amino-acid chain: Putative defensin-like protein 62 (76 aa).

The signal sequence occupies residues 1–26 (MDVTKTYVTIFVVAILTISVLIQIQQ). 4 cysteine pairs are disulfide-bonded: C30-C71, C34-C57, C43-C69, and C47-C70.

The protein belongs to the DEFL family.

The protein localises to the secreted. In Arabidopsis thaliana (Mouse-ear cress), this protein is Putative defensin-like protein 62.